A 438-amino-acid chain; its full sequence is 3-phosphoshikimate 1-carboxyvinyltransferase (438 aa).

Lys-26, Ser-27, and Arg-31 together coordinate 3-phosphoshikimate. Lys-26 is a binding site for phosphoenolpyruvate. Positions 99 and 127 each coordinate phosphoenolpyruvate. The 3-phosphoshikimate site is built by Ser-170, Ser-171, Gln-172, Ser-199, Glu-314, and His-343. Position 172 (Gln-172) interacts with phosphoenolpyruvate. The Proton acceptor role is filled by Glu-314. Residues Arg-347, Arg-388, and Lys-413 each coordinate phosphoenolpyruvate.

This sequence belongs to the EPSP synthase family. Monomer.

It is found in the cytoplasm. The catalysed reaction is 3-phosphoshikimate + phosphoenolpyruvate = 5-O-(1-carboxyvinyl)-3-phosphoshikimate + phosphate. Its pathway is metabolic intermediate biosynthesis; chorismate biosynthesis; chorismate from D-erythrose 4-phosphate and phosphoenolpyruvate: step 6/7. In terms of biological role, catalyzes the transfer of the enolpyruvyl moiety of phosphoenolpyruvate (PEP) to the 5-hydroxyl of shikimate-3-phosphate (S3P) to produce enolpyruvyl shikimate-3-phosphate and inorganic phosphate. The protein is 3-phosphoshikimate 1-carboxyvinyltransferase of Mycobacterium sp. (strain JLS).